Consider the following 441-residue polypeptide: MLNNSHLLIIWLFGLISGFNLMITGNTLNYWLAKEDIALQTIGILSFITLPYSINFLLAPIFDAVQIKYLNKIFGHRLSWICLTSTALIFLIYIFSFLDPRTNLVLFTFTALIISFFSAAQDTILSALRTEIVPKESLGFTSGIYIFGYRIGMLLAGSGAIYLSIYFTFNEIYKIFAGLVFIYLILLIVAARYTNSFGLVEERICHSPSFLCHSRGSGNPNNEFFIKRYYSNFLKIFLDSRFRGNDIKSGNDISLAYFIILILIFLVLYRLPDNLINVMINPFLLHLEYDAFEIASVGKFWGVVGAIIGGLVGGFIMKHKNILNSIFLFGIIHALGHILFIFLEINGKNSLLLFITIGIESITGGMTMTAYIAFISSLCQGKFRATQYSFLSSMMGISRSIFPIISGYMVVNFGWQNFFLFTTIITIPSLLILLKIKTKLQ.

Transmembrane regions (helical) follow at residues 5–25 (SHLLIIWLFGLISGFNLMITG), 42–62 (IGILSFITLPYSINFLLAPIF), 78–98 (LSWICLTSTALIFLIYIFSFL), 104–124 (LVLFTFTALIISFFSAAQDTI), 143–163 (GIYIFGYRIGMLLAGSGAIYL), 171–191 (EIYKIFAGLVFIYLILLIVAA), 249–269 (SGNDISLAYFIILILIFLVLY), 297–317 (VGKFWGVVGAIIGGLVGGFIM), 325–345 (SIFLFGIIHALGHILFIFLEI), 352–372 (LLFITIGIESITGGMTMTAYI), 390–410 (FLSSMMGISRSIFPIISGYMV), and 413–433 (FGWQNFFLFTTIITIPSLLIL).

Belongs to the major facilitator superfamily.

It is found in the cell inner membrane. This chain is Putative transporter AmpG 1 (ampG1), found in Rickettsia felis (strain ATCC VR-1525 / URRWXCal2) (Rickettsia azadi).